Here is a 232-residue protein sequence, read N- to C-terminus: Orotidine 5'-phosphate decarboxylase (232 aa).

Substrate is bound by residues Asp11, Lys33, 60–69 (DLKFHDIPHT), Thr119, Arg180, Gln189, Gly209, and Arg210. Lys62 serves as the catalytic Proton donor.

The protein belongs to the OMP decarboxylase family. Type 1 subfamily. Homodimer.

It carries out the reaction orotidine 5'-phosphate + H(+) = UMP + CO2. The protein operates within pyrimidine metabolism; UMP biosynthesis via de novo pathway; UMP from orotate: step 2/2. Catalyzes the decarboxylation of orotidine 5'-monophosphate (OMP) to uridine 5'-monophosphate (UMP). This Nitrosococcus oceani (strain ATCC 19707 / BCRC 17464 / JCM 30415 / NCIMB 11848 / C-107) protein is Orotidine 5'-phosphate decarboxylase.